Reading from the N-terminus, the 959-residue chain is MATKTQLELFTKLTSNDKAIRLSSAAQLIDSLSNEEELKYSLNRLTKGLSSGRESARIGFAVALTELLTRTKDIRATHVLDLLVKHNTASGNLKGQDERDFYFGLLFGLQSIVYSGILTHKESTIEDFQRVVDLLLQLSGKKNWLQDVCFYVIYKLVEQIPEISFSSNAFLAVNKLLQTPAVSKSTEGVGLFLCLTRVPDNVKSEEVAMANWEPAHPLHKSNLVTLSKIMRQADASETGGQNSAWKQKIPMVWKYIFEEYQRKTYSGLAPFHDFWAVVVDEGIFSSTSSLERKFWGFQIMELALDYVSSDNIGDIFSKNFLHCLINHLSDEDRYLYRAAKRVTSKLEKVSKQNPTLVYPIAIHLLGERGSLNFDRVTNTKLVEHILPLADEQGILQLFQLLLSYVKRCPEDIASDTKAVEWRRQWATDTMLSILRSKRSIKQEPWVRELLEIFIAYGYFEVPESEEVIPKFSEGTQNMFRLRLMSALSYLSSSAFQQSQTDHQLGDKNWPYVALNYLLELEKSPKNNLLISMDESVIEIVQKSLSVLHKVTKKIDKKAQHLQQLNAFQLLYSLVLLQVYAGDTDSIDVLEDIDNCYSKVFNKKSKRESTSNEPTAMEILTEVMLSLLSRPSLLLRKLVDMLFTSFSEDMNRESIHLICDVLKAKESVKDSEGMFAGEEVEEDAFGETEMDEDDFEEIDTDEIEEQSDWEMISNQDASDNEELERKLDKVLEDADAKVKDEESSEEELMNDEQMLALDEKLAEVFRERKKASNKEKKKNAQETKQQIVQFKVKVIDLIDNYYKTQPNNGLGFEFLIPLLEMILKTKHKVLEEKGQAVFRNRLSKLKWTEEKPSSKNVLEALKKVHVLCGKKASLGSTGSSISQLLLKLLADTPYLKEGVEVYLKSFLLWIQEPSKSHYNANIFHDFINWGAQQRLKHQQTSTAASSPQKTGHHENEKTNH.

Phosphoserine occurs at positions 742 and 743. The tract at residues 936 to 959 (HQQTSTAASSPQKTGHHENEKTNH) is disordered. A compositionally biased stretch (polar residues) spans 937 to 948 (QQTSTAASSPQK). A compositionally biased stretch (basic and acidic residues) spans 950–959 (GHHENEKTNH).

This sequence belongs to the MYBBP1A family. As to quaternary structure, interacts with cdc10.

The protein resides in the nucleus. Functionally, plays an important role in the regulation of rRNA transcription. Binds to rDNA promoter fragments. The sequence is that of rDNA transcriptional regulator pol5 (pol5) from Schizosaccharomyces pombe (strain 972 / ATCC 24843) (Fission yeast).